We begin with the raw amino-acid sequence, 153 residues long: Aspartate carbamoyltransferase regulatory chain (153 aa).

4 residues coordinate Zn(2+): Cys-110, Cys-115, Cys-138, and Cys-141.

The protein belongs to the PyrI family. As to quaternary structure, contains catalytic and regulatory chains. Zn(2+) is required as a cofactor.

Involved in allosteric regulation of aspartate carbamoyltransferase. The sequence is that of Aspartate carbamoyltransferase regulatory chain from Bacteroides thetaiotaomicron (strain ATCC 29148 / DSM 2079 / JCM 5827 / CCUG 10774 / NCTC 10582 / VPI-5482 / E50).